Consider the following 150-residue polypeptide: Large ribosomal subunit protein bL9 (150 aa).

It belongs to the bacterial ribosomal protein bL9 family.

In terms of biological role, binds to the 23S rRNA. The chain is Large ribosomal subunit protein bL9 from Sodalis glossinidius (strain morsitans).